Reading from the N-terminus, the 238-residue chain is MGRSFEVRKASMAKTAGAKIKVYSKYGKEIYVCAKNGGIDPDMNLSLRHLITKAKKDQVPSHVIEKALDKASGGGGEDYQPARYEGFGPGGISVIVDCLTDNGNRTFQDVRQCFVKTGAKIGTPGVVAHMFDHQAVFQFKGDDEESFLEALMMADCDVTDIELEDGVITIYAPNTEFFKVKTALNTEFPDLVIDVEEITFVPQNYSPVPEEDAEKFQKFLDMLDDCDDVQQVYHNAEM.

This sequence belongs to the TACO1 family.

The protein resides in the cytoplasm. The polypeptide is Probable transcriptional regulatory protein VV2_1184 (Vibrio vulnificus (strain CMCP6)).